Here is a 354-residue protein sequence, read N- to C-terminus: Neutral protease 2 homolog BCIN_12g06300 (354 aa).

Positions 1–19 are cleaved as a signal peptide; sequence MRSFSKILAVASLAAIANS. A propeptide spanning residues 20 to 179 is cleaved from the precursor; it reads AVLKRDNNVL…PSSIDRRTVL (160 aa). 2 cysteine pairs are disulfide-bonded: cysteine 183–cysteine 255 and cysteine 262–cysteine 280. Histidine 305 contacts Zn(2+). Glutamate 306 is an active-site residue. Residues histidine 309 and aspartate 320 each contribute to the Zn(2+) site.

The protein belongs to the peptidase M35 family. Requires Zn(2+) as cofactor.

It localises to the secreted. The catalysed reaction is Preferential cleavage of bonds with hydrophobic residues in P1'. Also 3-Asn-|-Gln-4 and 8-Gly-|-Ser-9 bonds in insulin B chain.. Functionally, secreted metalloproteinase that allows assimilation of proteinaceous substrates. Shows high activities on basic nuclear substrates such as histone and protamine. The protein is Neutral protease 2 homolog BCIN_12g06300 of Botryotinia fuckeliana (strain B05.10) (Noble rot fungus).